Here is a 280-residue protein sequence, read N- to C-terminus: Urease accessory protein UreD (280 aa).

It belongs to the UreD family. UreD, UreF and UreG form a complex that acts as a GTP-hydrolysis-dependent molecular chaperone, activating the urease apoprotein by helping to assemble the nickel containing metallocenter of UreC. The UreE protein probably delivers the nickel.

The protein resides in the cytoplasm. Functionally, required for maturation of urease via the functional incorporation of the urease nickel metallocenter. This is Urease accessory protein UreD from Pseudomonas aeruginosa (strain ATCC 15692 / DSM 22644 / CIP 104116 / JCM 14847 / LMG 12228 / 1C / PRS 101 / PAO1).